We begin with the raw amino-acid sequence, 860 residues long: Leucine--tRNA ligase (860 aa).

The 'HIGH' region motif lies at Pro-42 to His-52. The 'KMSKS' region signature appears at Lys-619 to Ser-623. Position 622 (Lys-622) interacts with ATP.

Belongs to the class-I aminoacyl-tRNA synthetase family.

It is found in the cytoplasm. It carries out the reaction tRNA(Leu) + L-leucine + ATP = L-leucyl-tRNA(Leu) + AMP + diphosphate. This Yersinia enterocolitica serotype O:8 / biotype 1B (strain NCTC 13174 / 8081) protein is Leucine--tRNA ligase.